A 256-amino-acid chain; its full sequence is Isoprenyl transferase 1 (256 aa).

The active site involves aspartate 34. Mg(2+) is bound at residue aspartate 34. Substrate contacts are provided by residues 35–38 (GNRR), tryptophan 39, histidine 52, and 80–82 (STE). The Proton acceptor role is filled by asparagine 83. Substrate is bound by residues arginine 86, arginine 205, and 211-213 (RLS). Position 224 (glutamate 224) interacts with Mg(2+).

This sequence belongs to the UPP synthase family. As to quaternary structure, homodimer. It depends on Mg(2+) as a cofactor.

Catalyzes the condensation of isopentenyl diphosphate (IPP) with allylic pyrophosphates generating different type of terpenoids. The polypeptide is Isoprenyl transferase 1 (Corynebacterium efficiens (strain DSM 44549 / YS-314 / AJ 12310 / JCM 11189 / NBRC 100395)).